Consider the following 66-residue polypeptide: MKCIALFLVLSMVVLMAEPGEAFIHHIIGGLFHVGKSIHDLIRGKNRDMAEQQELERAFDRERAFA.

An N-terminal signal peptide occupies residues 1 to 22 (MKCIALFLVLSMVVLMAEPGEA). Arg-43 bears the Arginine amide; partial mark. A propeptide spanning residues 44–66 (GKNRDMAEQQELERAFDRERAFA) is cleaved from the precursor.

This sequence belongs to the pleurocidin family. Post-translationally, this peptide exists in N-terminally amidated and non-amidated forms. The amidated form is more active and has a greater alpha-helix content than the non-amidated form. As to expression, expressed in gill, skin, intestine, spleen, anterior kidney, and blood cells.

Its subcellular location is the secreted. In terms of biological role, the amidated peptide is bactericidal on human pathogens like S.aureus or E.coli, as well as on the fish pathogen A.salmonicida. May also be active against a variety of fungi. It can kill bacteria in less than 30 minutes (S.aureus) and 120 minutes (V.vulnificus). It induces hemolysis of erythrocytes from human and fishes (sea bass and lesser-spotted dogfish). Functionally, the non-amidated peptide only inhibits growth of human pathogens like S.aureus or E.coli, and the fish pathogen A.salmonicida. Induces hemolysis of erythrocytes from human and fishes (sea bass and lesser-spotted dogfish). The protein is Pteroicidin-alpha of Pterois volitans (Red lionfish).